Consider the following 617-residue polypeptide: 1-deoxy-D-xylulose-5-phosphate synthase (617 aa).

Thiamine diphosphate contacts are provided by residues His-80 and Gly-121–Ser-123. Asp-152 lines the Mg(2+) pocket. Residues Gly-153–Ala-154, Asn-181, Tyr-277, and Glu-360 contribute to the thiamine diphosphate site. Mg(2+) is bound at residue Asn-181.

The protein belongs to the transketolase family. DXPS subfamily. As to quaternary structure, homodimer. The cofactor is Mg(2+). It depends on thiamine diphosphate as a cofactor.

It catalyses the reaction D-glyceraldehyde 3-phosphate + pyruvate + H(+) = 1-deoxy-D-xylulose 5-phosphate + CO2. The protein operates within metabolic intermediate biosynthesis; 1-deoxy-D-xylulose 5-phosphate biosynthesis; 1-deoxy-D-xylulose 5-phosphate from D-glyceraldehyde 3-phosphate and pyruvate: step 1/1. Its function is as follows. Catalyzes the acyloin condensation reaction between C atoms 2 and 3 of pyruvate and glyceraldehyde 3-phosphate to yield 1-deoxy-D-xylulose-5-phosphate (DXP). This Blochmanniella floridana protein is 1-deoxy-D-xylulose-5-phosphate synthase.